The sequence spans 802 residues: Leucine--tRNA ligase (802 aa).

The short motif at Pro41 to His52 is the 'HIGH' region element. The 'KMSKS' region signature appears at Lys580 to Ser584. Residue Lys583 participates in ATP binding.

This sequence belongs to the class-I aminoacyl-tRNA synthetase family.

It is found in the cytoplasm. The catalysed reaction is tRNA(Leu) + L-leucine + ATP = L-leucyl-tRNA(Leu) + AMP + diphosphate. This Alkaliphilus oremlandii (strain OhILAs) (Clostridium oremlandii (strain OhILAs)) protein is Leucine--tRNA ligase.